We begin with the raw amino-acid sequence, 571 residues long: Origin recognition complex subunit 5 (571 aa).

Disordered stretches follow at residues 90-142 and 404-430; these read DDEY…YDDD and QIYP…GRQL. Low complexity-rich tracts occupy residues 107-133 and 407-416; these read NNNN…NNND and PPQQVPQQQK. Basic and acidic residues predominate over residues 417 to 428; it reads QQEKEKEKEKGR.

It belongs to the ORC1 family. In terms of assembly, ORC is composed of six subunits.

It localises to the nucleus. Functionally, component of the origin recognition complex (ORC) that binds origins of replication. DNA-binding is ATP-dependent, however specific DNA sequences that define origins of replication have not been identified so far. ORC is required to assemble the pre-replication complex necessary to initiate DNA replication. The protein is Origin recognition complex subunit 5 (orcE) of Dictyostelium discoideum (Social amoeba).